The primary structure comprises 458 residues: Monomethylamine methyltransferase MtmB1 (458 aa).

A non-standard amino acid (pyrrolysine) is located at residue Pyl-202.

Belongs to the monomethylamine methyltransferase family. Dimer of homotrimers. Can form a complex with MtmC (MtmC1 or MtmC2).

The catalysed reaction is Co(I)-[methylamine-specific corrinoid protein] + methylamine + H(+) = methyl-Co(III)-[methylamine-specific corrinoid protein] + NH4(+). It participates in one-carbon metabolism; methanogenesis from methylamine. Functionally, catalyzes the transfer of the methyl group from monomethylamine to the corrinoid cofactor of MtmC (MtmC1 or MtmC2). This Methanosarcina barkeri protein is Monomethylamine methyltransferase MtmB1 (mtmB1).